The primary structure comprises 457 residues: Fibrinogen C domain-containing protein 1-B (457 aa).

A disordered region spans residues 1 to 21 (MGSDRWKNIRGTPQMEDSVQE). Residues 1-33 (MGSDRWKNIRGTPQMEDSVQEKSQRKGCGYILC) lie on the Cytoplasmic side of the membrane. A helical; Signal-anchor for type II membrane protein transmembrane segment spans residues 34 to 54 (TVLLSVAVLLAVTVTGAVLFM). Residues 55 to 457 (NQYHAPSTEP…MKIRPQREEN (403 aa)) are Extracellular-facing. The region spanning 231–454 (CANGSKPRDC…FTEMKIRPQR (224 aa)) is the Fibrinogen C-terminal domain. An N-linked (GlcNAc...) asparagine glycan is attached at N233. C240 and C269 are joined by a disulfide. An N-linked (GlcNAc...) asparagine glycan is attached at N336. Residues D389 and D391 each coordinate Ca(2+). A disulfide bond links C397 and C410.

In terms of assembly, homotetramer; disulfide-linked.

Its subcellular location is the membrane. In terms of biological role, acetyl group-binding receptor which shows a calcium-dependent binding to acetylated structures such as chitin, some N-acetylated carbohydrates, and amino acids. This Xenopus laevis (African clawed frog) protein is Fibrinogen C domain-containing protein 1-B (fibcd1-b).